A 1318-amino-acid chain; its full sequence is DNA-directed RNA polymerase subunit beta' (1318 aa).

Residues Cys221, Cys295, Cys302, and Cys305 each contribute to the Zn(2+) site.

Belongs to the RNA polymerase beta' chain family. RpoC2 subfamily. As to quaternary structure, in cyanobacteria the RNAP catalytic core is composed of 2 alpha, 1 beta, 1 beta', 1 gamma and 1 omega subunit. When a sigma factor is associated with the core the holoenzyme is formed, which can initiate transcription. It depends on Zn(2+) as a cofactor.

The enzyme catalyses RNA(n) + a ribonucleoside 5'-triphosphate = RNA(n+1) + diphosphate. Its function is as follows. DNA-dependent RNA polymerase catalyzes the transcription of DNA into RNA using the four ribonucleoside triphosphates as substrates. The polypeptide is DNA-directed RNA polymerase subunit beta' (Synechococcus elongatus (strain ATCC 33912 / PCC 7942 / FACHB-805) (Anacystis nidulans R2)).